The primary structure comprises 156 residues: Ribosomal RNA large subunit methyltransferase H (156 aa).

S-adenosyl-L-methionine contacts are provided by residues Leu73, Gly104, and 123–128; that span reads LSSLTL.

Belongs to the RNA methyltransferase RlmH family. As to quaternary structure, homodimer.

Its subcellular location is the cytoplasm. It catalyses the reaction pseudouridine(1915) in 23S rRNA + S-adenosyl-L-methionine = N(3)-methylpseudouridine(1915) in 23S rRNA + S-adenosyl-L-homocysteine + H(+). Functionally, specifically methylates the pseudouridine at position 1915 (m3Psi1915) in 23S rRNA. The polypeptide is Ribosomal RNA large subunit methyltransferase H (Neisseria meningitidis serogroup C / serotype 2a (strain ATCC 700532 / DSM 15464 / FAM18)).